The primary structure comprises 303 residues: Signal recognition particle receptor FtsY (303 aa).

GTP is bound by residues 108–115 (GVNGAGKT), 190–194 (DTAGR), and 254–257 (TKLD).

This sequence belongs to the GTP-binding SRP family. FtsY subfamily. In terms of assembly, part of the signal recognition particle protein translocation system, which is composed of SRP and FtsY. SRP is a ribonucleoprotein composed of Ffh and a 4.5S RNA molecule.

Its subcellular location is the cell inner membrane. It localises to the cytoplasm. It carries out the reaction GTP + H2O = GDP + phosphate + H(+). Functionally, involved in targeting and insertion of nascent membrane proteins into the cytoplasmic membrane. Acts as a receptor for the complex formed by the signal recognition particle (SRP) and the ribosome-nascent chain (RNC). Interaction with SRP-RNC leads to the transfer of the RNC complex to the Sec translocase for insertion into the membrane, the hydrolysis of GTP by both Ffh and FtsY, and the dissociation of the SRP-FtsY complex into the individual components. The protein is Signal recognition particle receptor FtsY of Rickettsia felis (strain ATCC VR-1525 / URRWXCal2) (Rickettsia azadi).